Reading from the N-terminus, the 1343-residue chain is DNA-directed RNA polymerase subunit beta (1343 aa).

The protein belongs to the RNA polymerase beta chain family. As to quaternary structure, the RNAP catalytic core consists of 2 alpha, 1 beta, 1 beta' and 1 omega subunit. When a sigma factor is associated with the core the holoenzyme is formed, which can initiate transcription.

It catalyses the reaction RNA(n) + a ribonucleoside 5'-triphosphate = RNA(n+1) + diphosphate. Its function is as follows. DNA-dependent RNA polymerase catalyzes the transcription of DNA into RNA using the four ribonucleoside triphosphates as substrates. This is DNA-directed RNA polymerase subunit beta from Shewanella sediminis (strain HAW-EB3).